We begin with the raw amino-acid sequence, 73 residues long: Sec-independent protein translocase protein TatA (73 aa).

A helical membrane pass occupies residues 1 to 21 (MGSFSIGHWLIVLAIIVLLFG). The disordered stretch occupies residues 43–73 (MEDTTPEKSEKVEHKEESATSQKIEETTKNA).

Belongs to the TatA/E family. As to quaternary structure, the Tat system comprises two distinct complexes: a TatABC complex, containing multiple copies of TatA, TatB and TatC subunits, and a separate TatA complex, containing only TatA subunits. Substrates initially bind to the TatABC complex, which probably triggers association of the separate TatA complex to form the active translocon.

The protein resides in the cell inner membrane. Its function is as follows. Part of the twin-arginine translocation (Tat) system that transports large folded proteins containing a characteristic twin-arginine motif in their signal peptide across membranes. TatA could form the protein-conducting channel of the Tat system. The sequence is that of Sec-independent protein translocase protein TatA from Campylobacter concisus (strain 13826).